A 294-amino-acid polypeptide reads, in one-letter code: UPF0761 membrane protein YPN_0254 (294 aa).

7 helical membrane passes run 44–64, 67–87, 108–128, 136–156, 185–205, 212–232, and 246–266; these read LLSL…FPMF, ISIK…GDII, GLIV…NIIW, LVFS…LVGA, VFPL…VPTV, ALIG…GFAM, and VLAV…IVLL.

This sequence belongs to the UPF0761 family.

Its subcellular location is the cell inner membrane. The sequence is that of UPF0761 membrane protein YPN_0254 from Yersinia pestis bv. Antiqua (strain Nepal516).